The following is a 125-amino-acid chain: Small ribosomal subunit protein eS8 (125 aa).

A disordered region spans residues methionine 1–glutamine 20.

Belongs to the eukaryotic ribosomal protein eS8 family. Part of the 30S ribosomal subunit.

This chain is Small ribosomal subunit protein eS8, found in Methanoregula boonei (strain DSM 21154 / JCM 14090 / 6A8).